The chain runs to 304 residues: HTH-type transcriptional regulator BenM (304 aa).

The HTH lysR-type domain maps to 1 to 58 (MELRHLRYFVAVVEEQSFTKAADKLCIAQPPLSRQIQNLEEELGIQLLERGSRPVKTT). A DNA-binding region (H-T-H motif) is located at residues 18-37 (FTKAADKLCIAQPPLSRQIQ). Residues S99 and L104 each coordinate benzoate. Position 99 (S99) interacts with cis,cis-muconate. T128 contacts cis,cis-muconate. 3 residues coordinate benzoate: F144, R160, and N202. Cis,cis-muconate is bound at residue F203. Position 293 (Y293) interacts with benzoate.

It belongs to the LysR transcriptional regulatory family. Homotetramer; dimer of dimers. The dimers can also associate to form linear, higher oligomers (in vitro).

Functionally, positive regulator of the ben and cat genes for benzoate degradation. BenM is necessary for ben gene expression but not for expression of the cat genes, which can be regulated by CatM. Binds to the inducers cis,cis-muconate and benzoate. The chain is HTH-type transcriptional regulator BenM (benM) from Acinetobacter baylyi (strain ATCC 33305 / BD413 / ADP1).